The primary structure comprises 926 residues: Alpha-aminoadipic semialdehyde synthase, mitochondrial (926 aa).

Residues 1 to 27 constitute a mitochondrion transit peptide; that stretch reads MLRVSRTKLGRLSPSLSRGLHHKAVMA. Positions 28–455 are lysine-ketoglutarate reductase; the sequence is LRREDVNAWE…DAVIASNGML (428 aa). Lysine 48 and lysine 56 each carry N6-acetyllysine. Lysine 93 is modified (N6-acetyllysine; alternate). An N6-succinyllysine; alternate modification is found at lysine 93. Lysine 128 bears the N6-acetyllysine mark. Residue lysine 138 is modified to N6-acetyllysine; alternate. Lysine 138 is subject to N6-succinyllysine; alternate. An N6-succinyllysine modification is found at lysine 274. Lysine 286 carries the N6-acetyllysine; alternate modification. At lysine 286 the chain carries N6-succinyllysine; alternate. N6-succinyllysine is present on lysine 333. Lysine 458 carries the post-translational modification N6-acetyllysine; alternate. Residue lysine 458 is modified to N6-succinyllysine; alternate. The saccharopine dehydrogenase stretch occupies residues 477-926; sequence MGTKKKVLVL…MYTTQSTIKL (450 aa). Residues serine 488, aspartate 512, and glutamine 516 each coordinate NAD(+). N6-acetyllysine; alternate occurs at positions 523 and 535. Lysine 523 and lysine 535 each carry N6-succinyllysine; alternate. NAD(+) is bound by residues leucine 554, alanine 576, and serine 577. 577 to 578 lines the L-saccharopine pocket; the sequence is SY. An N6-acetyllysine; alternate modification is found at lysine 584. Lysine 584 bears the N6-succinyllysine; alternate mark. NAD(+)-binding residues include leucine 603, aspartate 604, and proline 605. Aspartate 604 lines the L-saccharopine pocket. Arginine 703 provides a ligand contact to L-saccharopine. N6-acetyllysine is present on lysine 707. Residue 724-726 participates in L-saccharopine binding; sequence TLR. At lysine 732 the chain carries N6-succinyllysine. N6-acetyllysine is present on lysine 739. An N6-acetyllysine; alternate modification is found at lysine 761. N6-succinyllysine; alternate is present on lysine 761. Lysine 780 is subject to N6-acetyllysine.

This sequence in the N-terminal section; belongs to the AlaDH/PNT family. It in the C-terminal section; belongs to the saccharopine dehydrogenase family. Homotetramer.

Its subcellular location is the mitochondrion. It carries out the reaction L-saccharopine + NADP(+) + H2O = L-lysine + 2-oxoglutarate + NADPH + H(+). The catalysed reaction is L-saccharopine + NAD(+) + H2O = (S)-2-amino-6-oxohexanoate + L-glutamate + NADH + H(+). It functions in the pathway amino-acid degradation; L-lysine degradation via saccharopine pathway; glutaryl-CoA from L-lysine: step 1/6. Its pathway is amino-acid degradation; L-lysine degradation via saccharopine pathway; glutaryl-CoA from L-lysine: step 2/6. Its function is as follows. Bifunctional enzyme that catalyzes the first two steps in lysine degradation. This chain is Alpha-aminoadipic semialdehyde synthase, mitochondrial, found in Bos taurus (Bovine).